A 217-amino-acid polypeptide reads, in one-letter code: Zinc finger CCHC-type and RNA-binding motif-containing protein 1 (217 aa).

Residues 10–88 (STVYVSNLPF…RVIKASIAID (79 aa)) form the RRM domain. The CCHC-type zinc finger occupies 105 to 122 (SKCYECGESGHLSYACPK). The interval 120-217 (CPKNMLGERE…YFSDEEELSD (98 aa)) is disordered. The span at 145–163 (PEEEIEEVEESEDEGEDPA) shows a compositional bias: acidic residues. Residues S155, S210, and S216 each carry the phosphoserine modification.

Component of the U11/U12 snRNPs that are part of the U12-type spliceosome.

It localises to the nucleus. The protein localises to the nucleoplasm. In Homo sapiens (Human), this protein is Zinc finger CCHC-type and RNA-binding motif-containing protein 1 (ZCRB1).